Reading from the N-terminus, the 259-residue chain is Type III pantothenate kinase (259 aa).

6-13 (DTGNTNTV) contacts ATP. 107-110 (GPDR) lines the substrate pocket. The Proton acceptor role is filled by Asp-109. A K(+)-binding site is contributed by Asp-129. ATP is bound at residue Thr-132. Thr-184 serves as a coordination point for substrate.

Belongs to the type III pantothenate kinase family. In terms of assembly, homodimer. Requires NH4(+) as cofactor. K(+) serves as cofactor.

The protein localises to the cytoplasm. The catalysed reaction is (R)-pantothenate + ATP = (R)-4'-phosphopantothenate + ADP + H(+). It participates in cofactor biosynthesis; coenzyme A biosynthesis; CoA from (R)-pantothenate: step 1/5. Functionally, catalyzes the phosphorylation of pantothenate (Pan), the first step in CoA biosynthesis. The chain is Type III pantothenate kinase from Paracoccus denitrificans (strain Pd 1222).